Reading from the N-terminus, the 285-residue chain is Foldase protein PrsA 2 (285 aa).

A signal peptide spans 1 to 20 (MRGKHIFIITALISILMLAA). Cys21 carries N-palmitoyl cysteine lipidation. A lipid anchor (S-diacylglycerol cysteine) is attached at Cys21. In terms of domain architecture, PpiC spans 134–224 (KPEIKASHIL…NGYHIIKLTG (91 aa)).

It belongs to the PrsA family.

The protein resides in the cell membrane. The enzyme catalyses [protein]-peptidylproline (omega=180) = [protein]-peptidylproline (omega=0). Functionally, plays a major role in protein secretion by helping the post-translocational extracellular folding of several secreted proteins. Important for the secretion of the protective antigen. The three PsrA proteins in this organism show different but overlapping substrate specificities. The polypeptide is Foldase protein PrsA 2 (prsA2) (Bacillus anthracis).